A 251-amino-acid chain; its full sequence is Probable transcriptional regulatory protein BLA_1344 (251 aa).

Belongs to the TACO1 family.

The protein localises to the cytoplasm. This chain is Probable transcriptional regulatory protein BLA_1344, found in Bifidobacterium animalis subsp. lactis (strain AD011).